Reading from the N-terminus, the 242-residue chain is UPF0246 protein SP70585_1589 (242 aa).

The protein belongs to the UPF0246 family.

This is UPF0246 protein SP70585_1589 from Streptococcus pneumoniae (strain 70585).